Reading from the N-terminus, the 667-residue chain is Probable E3 ubiquitin-protein ligase HIP1 (667 aa).

Disordered regions lie at residues 142-163 and 285-311; these read NGAS…NGQA and TTAG…RSFR. Low complexity predominate over residues 288 to 309; it reads GLSSSSYDPSGGNNNSGGSQRS. Residues 620–661 form an RING-type; atypical zinc finger; that stretch reads CCICQEEYVDGDDLGTLDCGHDFHVGCVRQWLVVKNTCPICK.

It belongs to the RING-type zinc finger family. In terms of assembly, interacts with HAL3.

The catalysed reaction is S-ubiquitinyl-[E2 ubiquitin-conjugating enzyme]-L-cysteine + [acceptor protein]-L-lysine = [E2 ubiquitin-conjugating enzyme]-L-cysteine + N(6)-ubiquitinyl-[acceptor protein]-L-lysine.. It functions in the pathway protein modification; protein ubiquitination. Probable E3 ubiquitin-protein ligase that functions downstream of HAL3 and is required for HAL3-regulated plant growth. Activation of HIP1 by HAL3 may lead to the degradation of cell cycle suppressors, resulting in enhancement of cell division and plant growth. The chain is Probable E3 ubiquitin-protein ligase HIP1 (HIP1) from Oryza sativa subsp. japonica (Rice).